A 465-amino-acid polypeptide reads, in one-letter code: Cysteine--tRNA ligase (465 aa).

Cys-27 provides a ligand contact to Zn(2+). Residues 29–39 (PTVYNFFHIGN) carry the 'HIGH' region motif. The Zn(2+) site is built by Cys-207, His-232, and Glu-236. Positions 264-268 (KMSKS) match the 'KMSKS' region motif. An ATP-binding site is contributed by Lys-267.

This sequence belongs to the class-I aminoacyl-tRNA synthetase family. Monomer. Zn(2+) serves as cofactor.

The protein localises to the cytoplasm. It carries out the reaction tRNA(Cys) + L-cysteine + ATP = L-cysteinyl-tRNA(Cys) + AMP + diphosphate. This is Cysteine--tRNA ligase from Clostridium kluyveri (strain NBRC 12016).